Reading from the N-terminus, the 291-residue chain is uncharacterized protein (291 aa).

Transmembrane regions (helical) follow at residues 42-62 and 86-106; these read IFFF…RALW and TIFP…LALD.

It belongs to the cytochrome c oxidase subunit 2 family.

The protein localises to the mitochondrion membrane. This is an uncharacterized protein from Arabidopsis thaliana (Mouse-ear cress).